A 495-amino-acid polypeptide reads, in one-letter code: uncharacterized protein (495 aa).

Residues 305 to 317 are compositionally biased toward low complexity; that stretch reads DYNNNNNENYSGS. Positions 305-404 are disordered; the sequence is DYNNNNNENY…LDEEDNRKNK (100 aa). A compositionally biased stretch (acidic residues) spans 335 to 347; sequence YDNDENNDDENND. The span at 348–363 shows a compositional bias: low complexity; it reads ENNNNNNNNNNNNNNN. A compositionally biased stretch (acidic residues) spans 386-398; it reads SDDDEADNELDEE.

This is an uncharacterized protein from Dictyostelium discoideum (Social amoeba).